The sequence spans 113 residues: Large ribosomal subunit protein uL22 (113 aa).

It belongs to the universal ribosomal protein uL22 family. In terms of assembly, part of the 50S ribosomal subunit.

In terms of biological role, this protein binds specifically to 23S rRNA; its binding is stimulated by other ribosomal proteins, e.g. L4, L17, and L20. It is important during the early stages of 50S assembly. It makes multiple contacts with different domains of the 23S rRNA in the assembled 50S subunit and ribosome. Functionally, the globular domain of the protein is located near the polypeptide exit tunnel on the outside of the subunit, while an extended beta-hairpin is found that lines the wall of the exit tunnel in the center of the 70S ribosome. In Bacillus cereus (strain ATCC 10987 / NRS 248), this protein is Large ribosomal subunit protein uL22.